The primary structure comprises 410 residues: Envelope glycoprotein (410 aa).

Topologically, residues 1-410 (PHQIYNVTWV…VRFRREPISL (410 aa)) are extracellular. N-linked (GlcNAc...) asparagine; by host glycans are attached at residues N6 and N21. Cystine bridges form between C85–C107 and C99–C112. Residues 193–242 (PPQAMGPNLVLPDRKPPSRQSQTGSKVATQRPQTNESAPRSIAPTTMGPK) are disordered. Residues 210–230 (SRQSQTGSKVATQRPQTNESA) are compositionally biased toward polar residues. N-linked (GlcNAc...) asparagine; by host glycosylation is found at N227, N262, and N267. Positions 272–275 (CWLC) match the CXXC motif. N-linked (GlcNAc...) asparagine; by host glycans are attached at residues N294, N334, N350, and N370.

The mature envelope protein (Env) consists of a trimer of SU-TM heterodimers attached by a labile interchain disulfide bond. Specific enzymatic cleavages in vivo yield mature proteins. Envelope glycoproteins are synthesized as an inactive precursor that is N-glycosylated and processed likely by host cell furin or by a furin-like protease in the Golgi to yield the mature SU and TM proteins. The cleavage site between SU and TM requires the minimal sequence [KR]-X-[KR]-R.

Its subcellular location is the virion membrane. It localises to the host cell membrane. In terms of biological role, the surface protein (SU) attaches the virus to the host cell by binding to its receptor. This interaction triggers the refolding of the transmembrane protein (TM) and is thought to activate its fusogenic potential by unmasking its fusion peptide. Fusion occurs at the host cell plasma membrane. Functionally, the transmembrane protein (TM) acts as a class I viral fusion protein. Under the current model, the protein has at least 3 conformational states: pre-fusion native state, pre-hairpin intermediate state, and post-fusion hairpin state. During viral and target cell membrane fusion, the coiled coil regions (heptad repeats) assume a trimer-of-hairpins structure, positioning the fusion peptide in close proximity to the C-terminal region of the ectodomain. The formation of this structure appears to drive apposition and subsequent fusion of viral and target cell membranes. Membranes fusion leads to delivery of the nucleocapsid into the cytoplasm. The protein is Envelope glycoprotein (env) of Feline leukemia virus (strain C/FA27).